A 230-amino-acid chain; its full sequence is Sugar fermentation stimulation protein homolog (230 aa).

Belongs to the SfsA family.

This Caldivirga maquilingensis (strain ATCC 700844 / DSM 13496 / JCM 10307 / IC-167) protein is Sugar fermentation stimulation protein homolog.